The chain runs to 375 residues: Putative ZDHHC-type palmitoyltransferase 8 (375 aa).

2 helical membrane passes run 4–24 and 40–60; these read LFDF…TDFL and VVGM…VSLW. N-linked (GlcNAc...) asparagine glycosylation occurs at Asn-95. 3 helical membrane passes run 105–125, 221–241, and 285–305; these read ITFY…YYYY, FILF…LSFF, and YSFI…ILLF. A DHHC domain is found at 176–226; that stretch reads VSDGKWSTINKPKSHHCRICKRCIDSMDHHCPFAANCIGINNHHYFILFIG. A glycan (N-linked (GlcNAc...) asparagine) is linked at Asn-343.

This sequence belongs to the DHHC palmitoyltransferase family.

The protein localises to the membrane. It carries out the reaction L-cysteinyl-[protein] + hexadecanoyl-CoA = S-hexadecanoyl-L-cysteinyl-[protein] + CoA. This chain is Putative ZDHHC-type palmitoyltransferase 8, found in Dictyostelium discoideum (Social amoeba).